Consider the following 20-residue polypeptide: Antimicrobial peptide AJN-10 (20 aa).

It localises to the secreted. Functionally, displays antimicrobial activity against the Gram-negative bacterium A.hydrophila. This Anguilla japonica (Japanese eel) protein is Antimicrobial peptide AJN-10.